The chain runs to 1476 residues: Cystic fibrosis transmembrane conductance regulator (1476 aa).

Topologically, residues 1 to 77 (MQKSPLEKAS…QLIHALRRCF (77 aa)) are cytoplasmic. Residues 78 to 98 (VWRFVFYGVLLYLGEVTKAVQ) form a helical membrane-spanning segment. In terms of domain architecture, ABC transmembrane type-1 1 spans 81-365 (FVFYGVLLYL…TAVQIWYDSL (285 aa)). Topologically, residues 99 to 122 (PVLLGRIIASYDPDNTEERSIAIY) are extracellular. Residues 123–146 (LGIGLCLLFIVRTLLLHPAIFGLH) form a helical membrane-spanning segment. The Cytoplasmic segment spans residues 147 to 195 (HIGMQMRIAMFSLIYKKTLKLSSRVLDKISIGQLISLLSNNLNKFDEGL). A helical transmembrane segment spans residues 196-216 (ALAHFIWIAPLQVVLLMGLLW). The Extracellular portion of the chain corresponds to 217-222 (DLLQFS). A helical transmembrane segment spans residues 223 to 243 (AFCGLGLLIVLVIFQAILGKM). Residues 244–298 (MVKYRDKRAAKINERLVITSEVIDNIYSVKAYCWESAMEKIIESLREEELKMTRR) are Cytoplasmic-facing. A helical transmembrane segment spans residues 299-319 (SAYMRFFTSSAFFFSGFFVVF). Topologically, residues 320 to 339 (LSVLPYTVINGIVLRKIFTT) are extracellular. The helical transmembrane segment at 340 to 358 (ISFCIVLRMSVTRQFPTAV) threads the bilayer. At 359–853 (QIWYDSLGMI…YLRYFTLHRG (495 aa)) the chain is on the cytoplasmic side. Residues tryptophan 401, 458–465 (GSTGAGKT), and glutamine 493 contribute to the ATP site. The region spanning 412–646 (VQLNNDDRKT…RPDFSSKLMG (235 aa)) is the ABC transporter 1 domain. Cysteine 524 carries S-palmitoyl cysteine lipidation. Phosphoserine is present on residues serine 549 and serine 660. The segment at 654 to 826 (TEERRSSILT…EEINEEDLKE (173 aa)) is disordered R region. Phosphoserine; by PKA is present on serine 670. Phosphoserine occurs at positions 684, 698, and 710. Phosphothreonine is present on threonine 715. Phosphoserine is present on residues serine 732, serine 763, serine 785, serine 790, and serine 808. Residues 854 to 874 (LFAVLIWCVLVFLVEVAASLF) traverse the membrane as a helical segment. In terms of domain architecture, ABC transmembrane type-1 2 spans 854-1153 (LFAVLIWCVL…SSIDTDSLMR (300 aa)). The Extracellular segment spans residues 875–913 (VLWLLKNNPVNGGNNGTKIANTSYVVVITSSSFYYIFYI). 2 N-linked (GlcNAc...) asparagine glycosylation sites follow: asparagine 889 and asparagine 895. The chain crosses the membrane as a discontinuously helical span at residues 914-934 (YVGVADTLLALSLFRGLPLVH). Residues 935–985 (TLITASKILHRKMLHSILHAPMSTFNKLKAGGILNRFSKDIAILDDFLPLT) lie on the Cytoplasmic side of the membrane. A helical membrane pass occupies residues 986 to 1006 (IFDFIQLLFIVVGAIIVVSAL). The Extracellular segment spans residues 1007 to 1008 (QP). The helical transmembrane segment at 1009 to 1029 (YIFLATVPGLAVFILLRAYFL) threads the bilayer. The Cytoplasmic segment spans residues 1030 to 1090 (HTSQQLKQLE…TANWFMYLAT (61 aa)). The helical transmembrane segment at 1091–1111 (LRWFQMRIDMIFVLFFIVVTF) threads the bilayer. Over 1112 to 1125 (ISILTTGEGEGTTG) the chain is Extracellular. A helical membrane pass occupies residues 1126–1146 (IILTLAMNIMSTLQWAVNSSI). The Cytoplasmic portion of the chain corresponds to 1147 to 1476 (DTDSLMRSVS…TEEEVQETRL (330 aa)). The 232-residue stretch at 1208–1439 (VKDLTVKYVD…KSVFQRALSS (232 aa)) folds into the ABC transporter 2 domain. ATP contacts are provided by residues tyrosine 1215 and 1240-1247 (GRTGSGKS). The segment at 1382 to 1476 (RVLRQAFAGC…TEEEVQETRL (95 aa)) is interaction with GORASP2. A lipid anchor (S-palmitoyl cysteine) is attached at cysteine 1391. Phosphoserine is present on residues serine 1440 and serine 1452. Basic residues predominate over residues 1445–1456 (LFHGRHSSKQKP). A disordered region spans residues 1445-1476 (LFHGRHSSKQKPRTQITAVKEETEEEVQETRL). The segment covering 1466–1476 (ETEEEVQETRL) has biased composition (acidic residues). The PDZ-binding motif lies at 1474-1476 (TRL).

Belongs to the ABC transporter superfamily. ABCC family. CFTR transporter (TC 3.A.1.202) subfamily. Monomer; does not require oligomerization for channel activity. May form oligomers in the membrane. Interacts with SLC4A7 through NHERF1. Interacts with SHANK2. Interacts with NHERF1 and MYO6. Interacts (via C-terminus) with GOPC (via PDZ domain); this promotes CFTR internalization and thereby decreases channel activity. Interacts with SLC4A7 through NHERF1. Found in a complex with MYO5B and RAB11A. Interacts with ANO1. Interacts with SLC26A8. Interacts with AHCYL1; the interaction increases CFTR activity. Interacts with CSE1L. The core-glycosylated form interacts with GORASP2 (via PDZ GRASP-type 1 domain) in respone to ER stress. Interacts with MARCHF2; the interaction leads to CFTR ubiqtuitination and degradation. Interacts with ADGRG2. Post-translationally, N-glycosylated. Phosphorylated; cAMP treatment promotes phosphorylation and activates the channel. Dephosphorylation decreases the ATPase activity (in vitro). Phosphorylation at PKA sites activates the channel. Phosphorylation at PKC sites enhances the response to phosphorylation by PKA. Phosphorylated by AMPK; this inhibits channel activity. In terms of processing, ubiquitinated, leading to its degradation in the lysosome. Deubiquitination by USP10 in early endosomes enhances its endocytic recycling to the cell membrane. Ubiquitinated by RNF185 during ER stress. Ubiquitinated by MARCHF2. In terms of tissue distribution, detected in epithelial cells in nasopharynx, submandibular gland, pancreas and ileum (at protein level). Expressed in the epididymis. In the caput section of the epididymis, expressed uniformly on both the luminal and basolateral sides of the ducts and on sperm in the caput lumen (at protein level). In the cauda, detected along the luminal border but not continuously and is also expressed on the basolateral surface. Within the caudal lumen, detected on sperm.

The protein resides in the apical cell membrane. It localises to the early endosome membrane. The protein localises to the cell membrane. Its subcellular location is the recycling endosome membrane. It is found in the endoplasmic reticulum membrane. The protein resides in the nucleus. The catalysed reaction is ATP + H2O + closed Cl(-) channel = ADP + phosphate + open Cl(-) channel.. It catalyses the reaction chloride(in) = chloride(out). The enzyme catalyses hydrogencarbonate(in) = hydrogencarbonate(out). It carries out the reaction ATP + H2O = ADP + phosphate + H(+). Epithelial ion channel that plays an important role in the regulation of epithelial ion and water transport and fluid homeostasis. Mediates the transport of chloride ions across the cell membrane. Possesses an intrinsic ATPase activity and utilizes ATP to gate its channel; the passive flow of anions through the channel is gated by cycles of ATP binding and hydrolysis by the ATP-binding domains. The ion channel is also permeable to HCO(3)(-); selectivity depends on the extracellular chloride concentration. Exerts its function also by modulating the activity of other ion channels and transporters. Contributes to the regulation of the pH and the ion content of the epithelial fluid layer. Modulates the activity of the epithelial sodium channel (ENaC) complex, in part by regulating the cell surface expression of the ENaC complex. May regulate bicarbonate secretion and salvage in epithelial cells by regulating the transporter SLC4A7. Can inhibit the chloride channel activity of ANO1. Plays a role in the chloride and bicarbonate homeostasis during sperm epididymal maturation and capacitation. This is Cystic fibrosis transmembrane conductance regulator from Rattus norvegicus (Rat).